The sequence spans 246 residues: 1-(5-phosphoribosyl)-5-[(5-phosphoribosylamino)methylideneamino] imidazole-4-carboxamide isomerase (246 aa).

Asp8 serves as the catalytic Proton acceptor. Asp129 serves as the catalytic Proton donor.

This sequence belongs to the HisA/HisF family.

The protein resides in the cytoplasm. The catalysed reaction is 1-(5-phospho-beta-D-ribosyl)-5-[(5-phospho-beta-D-ribosylamino)methylideneamino]imidazole-4-carboxamide = 5-[(5-phospho-1-deoxy-D-ribulos-1-ylimino)methylamino]-1-(5-phospho-beta-D-ribosyl)imidazole-4-carboxamide. It functions in the pathway amino-acid biosynthesis; L-histidine biosynthesis; L-histidine from 5-phospho-alpha-D-ribose 1-diphosphate: step 4/9. The polypeptide is 1-(5-phosphoribosyl)-5-[(5-phosphoribosylamino)methylideneamino] imidazole-4-carboxamide isomerase (Desulforamulus reducens (strain ATCC BAA-1160 / DSM 100696 / MI-1) (Desulfotomaculum reducens)).